We begin with the raw amino-acid sequence, 219 residues long: Adenylate kinase (219 aa).

10–15 (GAGKGT) contacts ATP. Residues 30–59 (STGDMLRAAVKAETPVGLEAKKVMDAGQLV) form an NMP region. Residues T31, R36, 57–59 (QLV), 85–88 (GFPR), and Q92 each bind AMP. The segment at 122–159 (GRRVHLSSGRTYHVLFNPPKQEGLDDETGEPLVQRADD) is LID. ATP contacts are provided by residues R123 and 132 to 133 (TY). AMP contacts are provided by R156 and R167. An ATP-binding site is contributed by G203.

Belongs to the adenylate kinase family. As to quaternary structure, monomer.

Its subcellular location is the cytoplasm. The catalysed reaction is AMP + ATP = 2 ADP. Its pathway is purine metabolism; AMP biosynthesis via salvage pathway; AMP from ADP: step 1/1. Catalyzes the reversible transfer of the terminal phosphate group between ATP and AMP. Plays an important role in cellular energy homeostasis and in adenine nucleotide metabolism. This chain is Adenylate kinase, found in Chlorobium limicola (strain DSM 245 / NBRC 103803 / 6330).